Reading from the N-terminus, the 700-residue chain is Elongation factor G (700 aa).

Residues 10-286 (TKVRNIGIMA…AVIDYLPSPL (277 aa)) enclose the tr-type G domain. GTP is bound by residues 19-26 (AHIDAGKT), 83-87 (DTPGH), and 137-140 (NKMD).

Belongs to the TRAFAC class translation factor GTPase superfamily. Classic translation factor GTPase family. EF-G/EF-2 subfamily.

The protein resides in the cytoplasm. Its function is as follows. Catalyzes the GTP-dependent ribosomal translocation step during translation elongation. During this step, the ribosome changes from the pre-translocational (PRE) to the post-translocational (POST) state as the newly formed A-site-bound peptidyl-tRNA and P-site-bound deacylated tRNA move to the P and E sites, respectively. Catalyzes the coordinated movement of the two tRNA molecules, the mRNA and conformational changes in the ribosome. The protein is Elongation factor G of Kineococcus radiotolerans (strain ATCC BAA-149 / DSM 14245 / SRS30216).